We begin with the raw amino-acid sequence, 506 residues long: Anaerobic nitric oxide reductase transcription regulator NorR (506 aa).

Asp-57 bears the 4-aspartylphosphate mark. Residues 187–416 (MIGLSPNMMQ…LEHAIHRAVV (230 aa)) enclose the Sigma-54 factor interaction domain. ATP is bound by residues 215-222 (GETGTGKE) and 278-287 (ADNGTLFLDE). The H-T-H motif DNA-binding region spans 481 to 500 (WAACARALETDVANLHRLAK).

It functions in the pathway nitrogen metabolism; nitric oxide reduction. In terms of biological role, required for the expression of anaerobic nitric oxide (NO) reductase, acts as a transcriptional activator for at least the norVW operon. Activation also requires sigma-54. The polypeptide is Anaerobic nitric oxide reductase transcription regulator NorR (Citrobacter koseri (strain ATCC BAA-895 / CDC 4225-83 / SGSC4696)).